Consider the following 2159-residue polypeptide: ATP-binding cassette sub-family A member 7 (2159 aa).

A helical membrane pass occupies residues 22 to 42; that stretch reads PIQLLVELLWPLFLFFILVAV. Topologically, residues 43 to 546 are extracellular; it reads RHSHPPLEHH…DVFLRVLSRS (504 aa). Cysteines 75 and 222 form a disulfide. Residue N309 is glycosylated (N-linked (GlcNAc...) asparagine). A run of 6 helical transmembrane segments spans residues 547–567, 590–610, 623–643, 652–672, 678–698, and 732–752; these read LPLFLTLAWIYSVALTVKAVV, LGWFLSCLGPFLVSAALLVLV, VVIFLFLAAFAVATVAQSFLL, LAAACGGLAYFALYLPYVLCV, LHLGGLLAASLLSPVAFGFGC, and AFLLLDAVIYGLALWYLEAVC. The region spanning 804–1035 is the ABC transporter 1 domain; the sequence is VSIRGLKKHF…LGCGYYLTLV (232 aa). ATP is bound at residue 838-845; it reads GHNGAGKT. A helical transmembrane segment spans residues 846-866; sequence TTLSILSGLFPPSSGSASILG. 2 disordered regions span residues 1042–1088 and 1172–1192; these read VTHD…GAVP and GGDSRPQLHLRTCTPQPPTGP. Positions 1044 to 1061 are enriched in basic and acidic residues; sequence HDAKGDSEDPRREKKSDG. Residues 1062 to 1081 are compositionally biased toward polar residues; that stretch reads NGRTSDTAFTRGTSDKSNQA. Residues 1246–1266 traverse the membrane as a helical segment; that stretch reads VVLPALFVGLALFFSLIVPPF. At 1267–1551 the chain is on the extracellular side; the sequence is GQYPPLQLSP…TLIASSVDVL (285 aa). C1359 and C1373 are oxidised to a cystine. The next 5 helical transmembrane spans lie at 1552-1572, 1598-1618, 1635-1655, 1663-1683, and 1743-1763; these read VSICVVFAMSFVPASFTLVLI, FLWDMCNYLVAVCIVVFIFLA, LLLLLYGWSITPLMYPASFFF, VVLTCINLFIGINSSMATFVL, and IIGKNLLAMMAQGPLFLLITL. The region spanning 1807-2039 is the ABC transporter 2 domain; sequence LVLRDLTKVY…FGAGHTLTLR (233 aa). ATP is bound at residue 1841-1848; it reads GVNGAGKT. Residues 2118-2159 are disordered; it reads QGEEEESSRQEAEEEEVSKPGRQHPKRVSRFLEDPSSVETMI. Residues 2119-2133 show a composition bias toward acidic residues; the sequence is GEEEESSRQEAEEEE.

The protein belongs to the ABC transporter superfamily. ABCA family. N-glycosylated. As to expression, widely expressed with higher expression in brain, lung, adrenal gland, spleen and hematopoietic tissues (at protein level). In the brain, expressed in cortex, cerebellum, hippocampus, olfactory bulb, neurons, astrocytes and microglia (at protein level). Also expressed in adipocytes and macrophages (at protein level). Expressed in thymocytes (at protein level). Highly expressed in spleen and hematopoietic tissues. Expressed in brain, lung, macrophages, microglia, oligodendrocytes and neurons.

The protein resides in the cell membrane. The protein localises to the golgi apparatus membrane. It is found in the early endosome membrane. Its subcellular location is the cytoplasm. It localises to the cell projection. The protein resides in the ruffle membrane. The protein localises to the phagocytic cup. Its function is as follows. Probable ATP-binding cassette (ABC) transporter that plays a role in lipid homeostasis and macrophage-mediated phagocytosis. Binds APOA1 and may function in apolipoprotein-mediated phospholipid efflux from cells. May also mediate cholesterol efflux. May regulate cellular ceramide homeostasis during keratinocyte differentiation. Involved in lipid raft organization and CD1D localization on thymocytes and antigen-presenting cells, which plays an important role in natural killer T-cell development and activation. Plays a role in phagocytosis of apoptotic cells by macrophages. Macrophage phagocytosis is stimulated by APOA1 or APOA2, probably by stabilization of ABCA7. Also involved in phagocytic clearance of amyloid-beta by microglia cells and macrophages. Further limits amyloid-beta production by playing a role in the regulation of amyloid-beta A4 precursor protein (APP) endocytosis and/or processing. This is ATP-binding cassette sub-family A member 7 (Abca7) from Mus musculus (Mouse).